Reading from the N-terminus, the 120-residue chain is MARIAGVNIPNHAHAVIGLQAIFGVGQTRAQQICAAASVNPSTKVKDLTEAEMEALRDQVAKFTVEGDLRREITMSIKRLMDMGCYRGFRHRRGLPCRGQRTRTNARTRKGPRKAIAGKK.

The interval 96–120 is disordered; sequence PCRGQRTRTNARTRKGPRKAIAGKK.

This sequence belongs to the universal ribosomal protein uS13 family. In terms of assembly, part of the 30S ribosomal subunit. Forms a loose heterodimer with protein S19. Forms two bridges to the 50S subunit in the 70S ribosome.

Functionally, located at the top of the head of the 30S subunit, it contacts several helices of the 16S rRNA. In the 70S ribosome it contacts the 23S rRNA (bridge B1a) and protein L5 of the 50S subunit (bridge B1b), connecting the 2 subunits; these bridges are implicated in subunit movement. Contacts the tRNAs in the A and P-sites. This chain is Small ribosomal subunit protein uS13, found in Chromobacterium violaceum (strain ATCC 12472 / DSM 30191 / JCM 1249 / CCUG 213 / NBRC 12614 / NCIMB 9131 / NCTC 9757 / MK).